The chain runs to 248 residues: 3-deoxy-manno-octulosonate cytidylyltransferase (248 aa).

Belongs to the KdsB family.

It is found in the cytoplasm. It catalyses the reaction 3-deoxy-alpha-D-manno-oct-2-ulosonate + CTP = CMP-3-deoxy-beta-D-manno-octulosonate + diphosphate. It functions in the pathway nucleotide-sugar biosynthesis; CMP-3-deoxy-D-manno-octulosonate biosynthesis; CMP-3-deoxy-D-manno-octulosonate from 3-deoxy-D-manno-octulosonate and CTP: step 1/1. The protein operates within bacterial outer membrane biogenesis; lipopolysaccharide biosynthesis. Its function is as follows. Activates KDO (a required 8-carbon sugar) for incorporation into bacterial lipopolysaccharide in Gram-negative bacteria. In Chlorobium phaeobacteroides (strain BS1), this protein is 3-deoxy-manno-octulosonate cytidylyltransferase.